Here is a 93-residue protein sequence, read N- to C-terminus: Small ribosomal subunit protein uS19 (93 aa).

The protein belongs to the universal ribosomal protein uS19 family.

Protein S19 forms a complex with S13 that binds strongly to the 16S ribosomal RNA. The chain is Small ribosomal subunit protein uS19 from Clostridioides difficile (strain 630) (Peptoclostridium difficile).